The primary structure comprises 1139 residues: Phospholipid-transporting ATPase tat-1 (1139 aa).

Helical transmembrane passes span 78-98 (YTTA…EIFE), 276-296 (IIFL…GSEI), and 318-338 (SFLW…PISL). Asp388 functions as the 4-aspartylphosphate intermediate in the catalytic mechanism. Transmembrane regions (helical) follow at residues 831 to 851 (ICLY…GQTI), 855 to 875 (WTIG…LGLF), 901 to 921 (IGNF…LFFL), 935 to 955 (GLTG…VATV), 972 to 992 (VACI…SLVF), and 1013 to 1033 (YTFW…DLVI).

The protein belongs to the cation transport ATPase (P-type) (TC 3.A.3) family. Type IV subfamily.

Its subcellular location is the cell membrane. It is found in the early endosome membrane. The protein localises to the recycling endosome membrane. It carries out the reaction ATP + H2O + phospholipidSide 1 = ADP + phosphate + phospholipidSide 2.. The enzyme catalyses a 1,2-diacyl-sn-glycero-3-phospho-L-serine(out) + ATP + H2O = a 1,2-diacyl-sn-glycero-3-phospho-L-serine(in) + ADP + phosphate + H(+). In terms of biological role, transports phosphatidylserine from the outer to the inner leaflet of the plasma membrane, thereby maintaining the enrichment of this phospholipid in the inner leaflet. Ectopic exposure of phosphatidylserine on the cell surface may result in removal of living cells by neighboring phagocytes. Regulation of the phosphatidylserine distribution in plasma membranes is likely to help in the maintenance and control of the membrane surface charge. Plays a role in the formation of the tubular membrane structure and in membrane trafficking and is specifically involved in the recycling and degradation of endocytic cargo, likely with its chaperone protein chat-1. The chain is Phospholipid-transporting ATPase tat-1 (tat-1) from Caenorhabditis elegans.